A 255-amino-acid chain; its full sequence is Spectinomycin 9-adenylyltransferase (255 aa).

It catalyses the reaction spectinomycin + ATP = 9-O-adenylylspectinomycin + diphosphate. Mediates bacterial resistance to the antibiotic spectinomycin but not streptomycin. The polypeptide is Spectinomycin 9-adenylyltransferase (Enterococcus faecalis (Streptococcus faecalis)).